The sequence spans 321 residues: Polyprenyl transferase cle5 (321 aa).

9 consecutive transmembrane segments (helical) span residues 26-46 (PLLATFSGVWATILAGSHKIT), 57-77 (VLSQALLCFICSFVFCGAGMV), 107-127 (EALVWMAFQFISSWVLVSWML), 132-149 (VQAAMLPVTLSTILYPFA), 159-179 (IYPQYLLGFTLAYPSLIGTLA), 189-209 (LWASINQSLPMFVTVFTWTLY), 232-252 (VLAGSYIHHLLVVLAVLVLGA), 262-282 (SQWLWGGWMGVWTWSFLGQLV), and 300-320 (FALGVWTVFVCVVELLIGGNG).

It belongs to the UbiA prenyltransferase family. Mg(2+) serves as cofactor.

The protein resides in the membrane. The protein operates within secondary metabolite biosynthesis; terpenoid biosynthesis. In terms of biological role, polyprenyl transferase; part of the cluster A that mediates the biosynthesis of chevalone E and its oxidized derivatives that possess a unique five-membered lactone ring and can synergistically enhance the cytotoxicity of doxorubicin (DOX) in breast cancer cells. Within the pathway, cle5 takes part to the biosynthesis of the molecular scaffold by catalyzing the C-3 geranylgeranylation reaction of triacetic acid lactone (TAL) produced by cle1. The molecular scaffold is commonly biosynthesized by a series of enzymes including the non-reducing polyketide synthase (NR-PKS) cle1 that produces the alpha-pyrone triacetic acid lactone (TAL); The membrane-bound prenyltransferase cle5 that accepts TAL as its substrate to perform a C-3 geranylgeranylation reaction, in which the pathway-dedicated GGPS cle6 is required to provide GGPP, the other substrate of cle5; the FAD-dependent monooxygenase Cle3 that forms an (S)-epoxide ring at the terminal olefin of the geranylgeranyl group; and the terpene cyclase Cle7 that catalyzes the cyclization of the prenyl group that yields the pentacyclic pathway intermediate chevalone E. Chevalone E can derivatize into seven new oxidized analogs by the cytochrome P450 monooxygenases cle2 (acting at C-20) and cle4 (acting at C-11 and C-12). This is Polyprenyl transferase cle5 from Aspergillus versicolor.